Reading from the N-terminus, the 905-residue chain is MSYSKKDDDGDESIFANVNQVTVTQDARAFNSSSISPRKSRRLLSKIAYLIYTGEHFQEKQATELFFGITKLFQHKDPSLRQFVYIIIKELSVVAEDVIMITSSIMKDTATGRETIYRPNAIRSLIRVIDANTVPAIERILTTGIVDPISAVASAALVSAYHLYPVAKDIVSRWNNEVQDAVTSHNVGRKVASSPFFTSTLGYTPNASGISQYHALGLLYRIRRHDSIAMNKLLQLLVSNLGTVSNSHAFVMLIRYISSLMDQNTQFRDQMVPFLHGWLKSKGDMVNLEVARNMVRLKNISDDDLQPVVSVLKIFLSSHRSATRFSAIRTLNELAMTRPHLVHSCNLNIESLITDVNRSIATYAITTLLKTGNDESVDRLMKQIVTFMSDISDNFKIIVVDAIRSLCLKFPRKQDSMLTFLSNILCDEGGYEFKRAAVDAISDMIKYIPESKERALAELCEFIEDCEYPKIAVRILSILGEEGPKASEPTRFIRYIYNRIMLENAIVRSAAVSALTKFGLNAEDKFVQRSVKVILTRCLEDADDEVRDRAAFSVKALEDRDAFLPVVKSDKIPSLPALERSLVIYISERKFGQGFDIKSVPVLSQEEIDAENLRIKKATTEVEFTEVTPAEDQNALASSNIETEFLNALESVSEFNEYGPVLKSSPSPIELTEQETEFVVKVVKHVFKDHLVVQFQLHNTLSEVILENAVVVSTPSTDDLVEECVVPAAIVSGEPVSIFVSFKFNDSVPYPLTTLTNTLQFTTKEIDIHTGEPEEEGYEDEYKIDDLDVSAGDFISPAYESNFDGLFDSLEHEASEVYVLSLLDSFRSTCSRVAELLQMQPLEGTENPTDKPVHVMKLSGKLVNGEKVLALVKMAHSKDGEGITIKVIARGESDSSVELVVGGIA.

5 HEAT repeats span residues T265 to D302, D303 to H340, D374 to R412, Q414 to E450, and K525 to F563. S604 bears the Phosphoserine mark.

This sequence belongs to the COPG family. As to quaternary structure, oligomeric complex that consists of at least the alpha, beta, beta', gamma, delta, epsilon and zeta subunits.

The protein localises to the cytoplasm. It localises to the golgi apparatus membrane. Its subcellular location is the cytoplasmic vesicle. It is found in the COPI-coated vesicle membrane. Functionally, the coatomer is a cytosolic protein complex that binds to dilysine motifs and reversibly associates with Golgi non-clathrin-coated vesicles, which further mediate biosynthetic protein transport from the ER, via the Golgi up to the trans Golgi network. Coatomer complex is required for budding from Golgi membranes, and is essential for the retrograde Golgi-to-ER transport of dilysine-tagged proteins. This is Probable coatomer subunit gamma (sec21) from Schizosaccharomyces pombe (strain 972 / ATCC 24843) (Fission yeast).